The sequence spans 737 residues: DNA topoisomerase 4 subunit A (737 aa).

The Topo IIA-type catalytic domain maps to 32-496; that stretch reads LPDVRDGLKP…SFEEVTLTNQ (465 aa). The active-site O-(5'-phospho-DNA)-tyrosine intermediate is the Y120.

The protein belongs to the type II topoisomerase GyrA/ParC subunit family. ParC type 1 subfamily. Heterotetramer composed of ParC and ParE.

The protein resides in the cell membrane. It catalyses the reaction ATP-dependent breakage, passage and rejoining of double-stranded DNA.. Its function is as follows. Topoisomerase IV is essential for chromosome segregation. It relaxes supercoiled DNA. Performs the decatenation events required during the replication of a circular DNA molecule. The chain is DNA topoisomerase 4 subunit A from Rickettsia felis (strain ATCC VR-1525 / URRWXCal2) (Rickettsia azadi).